A 114-amino-acid polypeptide reads, in one-letter code: Large ribosomal subunit protein uL22 (114 aa).

It belongs to the universal ribosomal protein uL22 family. In terms of assembly, part of the 50S ribosomal subunit.

Its function is as follows. This protein binds specifically to 23S rRNA; its binding is stimulated by other ribosomal proteins, e.g. L4, L17, and L20. It is important during the early stages of 50S assembly. It makes multiple contacts with different domains of the 23S rRNA in the assembled 50S subunit and ribosome. The globular domain of the protein is located near the polypeptide exit tunnel on the outside of the subunit, while an extended beta-hairpin is found that lines the wall of the exit tunnel in the center of the 70S ribosome. This is Large ribosomal subunit protein uL22 from Lysinibacillus sphaericus (strain C3-41).